Consider the following 335-residue polypeptide: Hsp90 co-chaperone Cdc37-like 1 (335 aa).

Residues 1–11 (MEQPWPPPGPW) are compositionally biased toward pro residues. The interval 1–42 (MEQPWPPPGPWSFPRTGGETEEESDLDVSPSSSHYSPVPDGG) is disordered. The self-association stretch occupies residues 2–170 (EQPWPPPGPW…YEQKIRHFGM (169 aa)). Residues 27-40 (DVSPSSSHYSPVPD) show a composition bias toward low complexity. A phosphoserine mark is found at Ser32 and Ser88. Residues 84–120 (HNSESLDQEHAKAQTAVSELRQREEEWRQKEEALVQR) are a coiled coil. The tract at residues 147 to 276 (KTEDEDKSQS…ARVRLYAQSQ (130 aa)) is self-association and interaction with Hsp90. Residues 266 to 335 (KARVRLYAQS…EDDDRMMDTV (70 aa)) are interaction with Hsp70. The interval 277-335 (SFAPVTVENHAPHSGVGCIGSAEPLPQNPDSLQCCPPAPLCSVDSVVHKEDDDRMMDTV) is required for interaction with STIP1.

The protein belongs to the CDC37 family. In terms of assembly, self-associates. Forms complexes with Hsp70 and Hsp90. Interacts with CDC37, FKBP4, PPID and STIP1.

It localises to the cytoplasm. In terms of biological role, co-chaperone that binds to numerous proteins and promotes their interaction with Hsp70 and Hsp90. The sequence is that of Hsp90 co-chaperone Cdc37-like 1 (Cdc37l1) from Rattus norvegicus (Rat).